Reading from the N-terminus, the 438-residue chain is Leupeptin-inactivating enzyme 1 (438 aa).

The first 37 residues, Met-1–Ala-37, serve as a signal peptide directing secretion. Zn(2+) is bound by residues His-125 and Asp-137. The active-site Proton acceptor is Glu-171. 3 residues coordinate Zn(2+): Glu-172, Asp-200, and His-287. A disulfide bridge links Cys-285 with Cys-290. A P/Homo B domain is found at Val-321 to Phe-438.

It belongs to the peptidase M28 family. M28A subfamily. As to quaternary structure, monomer. Requires Zn(2+) as cofactor.

The protein localises to the secreted. Activity is inhibited by metalloprotease inhibitors and activated by Mg(2+) and Ca(2+). Its function is as follows. A leucine-specific metalloprotease that plays a role in controlling the amount of leupeptin during colony development. Degrades leupeptin into three components, acetyl-leucine, leucine and argininal. Has a strict preference for leucine at the P1 site. The sequence is that of Leupeptin-inactivating enzyme 1 (lieA) from Streptomyces exfoliatus (Streptomyces hydrogenans).